Here is a 225-residue protein sequence, read N- to C-terminus: Thylakoid lumenal 17.9 kDa protein, chloroplastic (225 aa).

Its subcellular location is the plastid. It is found in the chloroplast thylakoid lumen. This is Thylakoid lumenal 17.9 kDa protein, chloroplastic from Arabidopsis thaliana (Mouse-ear cress).